Consider the following 296-residue polypeptide: NAD kinase (296 aa).

Asp-72 acts as the Proton acceptor in catalysis. NAD(+) contacts are provided by residues 72-73, 146-147, Arg-157, Lys-174, Asp-176, 187-192, and Gln-247; these read DG, ND, and TAYALS.

This sequence belongs to the NAD kinase family. It depends on a divalent metal cation as a cofactor.

The protein localises to the cytoplasm. It carries out the reaction NAD(+) + ATP = ADP + NADP(+) + H(+). Involved in the regulation of the intracellular balance of NAD and NADP, and is a key enzyme in the biosynthesis of NADP. Catalyzes specifically the phosphorylation on 2'-hydroxyl of the adenosine moiety of NAD to yield NADP. This chain is NAD kinase, found in Pseudomonas entomophila (strain L48).